The primary structure comprises 44 residues: Large ribosomal subunit protein bL34 (44 aa).

Residues 1–26 are disordered; it reads MKMTFQPKKRQRAKVHGFRQRMKTAG. Residues 7 to 22 are compositionally biased toward basic residues; sequence PKKRQRAKVHGFRQRM.

This sequence belongs to the bacterial ribosomal protein bL34 family.

This Agathobacter rectalis (strain ATCC 33656 / DSM 3377 / JCM 17463 / KCTC 5835 / VPI 0990) (Eubacterium rectale) protein is Large ribosomal subunit protein bL34.